The following is a 238-amino-acid chain: Phosphoribosylaminoimidazole-succinocarboxamide synthase (238 aa).

The protein belongs to the SAICAR synthetase family.

The enzyme catalyses 5-amino-1-(5-phospho-D-ribosyl)imidazole-4-carboxylate + L-aspartate + ATP = (2S)-2-[5-amino-1-(5-phospho-beta-D-ribosyl)imidazole-4-carboxamido]succinate + ADP + phosphate + 2 H(+). It participates in purine metabolism; IMP biosynthesis via de novo pathway; 5-amino-1-(5-phospho-D-ribosyl)imidazole-4-carboxamide from 5-amino-1-(5-phospho-D-ribosyl)imidazole-4-carboxylate: step 1/2. This chain is Phosphoribosylaminoimidazole-succinocarboxamide synthase, found in Marinomonas sp. (strain MWYL1).